The primary structure comprises 159 residues: MNITIISVGKIKEKYLSDAINEYSKRISRYSKLDIIEVADEKTPESPSDVEKSKILEKEAERILKHLKKDSFVITLEILGKEVTSESLAKKINDLSISGKSDITFIIGGSLGLSKNISEISDFKLSFSKMTFPHQLMRVILLEQIYRSFRIINGEPYHK.

Residues L76, G108, and 127–132 (FSKMTF) contribute to the S-adenosyl-L-methionine site.

The protein belongs to the RNA methyltransferase RlmH family.

It localises to the cytoplasm. It carries out the reaction pseudouridine(1915) in 23S rRNA + S-adenosyl-L-methionine = N(3)-methylpseudouridine(1915) in 23S rRNA + S-adenosyl-L-homocysteine + H(+). Functionally, specifically methylates the pseudouridine at position 1915 (m3Psi1915) in 23S rRNA. This Methanococcus maripaludis (strain C5 / ATCC BAA-1333) protein is Putative ribosomal RNA large subunit methyltransferase H.